A 347-amino-acid polypeptide reads, in one-letter code: D-alanine--D-alanine ligase (347 aa).

The ATP-grasp domain maps to Lys131–Glu333. An ATP-binding site is contributed by Glu161 to Glu216. Residues Asp287, Glu300, and Asn302 each contribute to the Mg(2+) site.

The protein belongs to the D-alanine--D-alanine ligase family. It depends on Mg(2+) as a cofactor. Mn(2+) is required as a cofactor.

The protein localises to the cytoplasm. The catalysed reaction is 2 D-alanine + ATP = D-alanyl-D-alanine + ADP + phosphate + H(+). It functions in the pathway cell wall biogenesis; peptidoglycan biosynthesis. In terms of biological role, cell wall formation. The chain is D-alanine--D-alanine ligase from Streptococcus pneumoniae (strain Hungary19A-6).